Here is a 58-residue protein sequence, read N- to C-terminus: Single-pass membrane and coiled-coil domain-containing protein 4 homolog (58 aa).

A coiled-coil region spans residues 1–31; the sequence is MRQLKGKVKETRKQKKERKLDNLETQAKIRT. A helical membrane pass occupies residues 31–51; sequence TVVLPALGVLAVFLVLFVYLK.

This sequence belongs to the SMCO4 family.

It is found in the membrane. The chain is Single-pass membrane and coiled-coil domain-containing protein 4 homolog from Drosophila melanogaster (Fruit fly).